Consider the following 285-residue polypeptide: Small ribosomal subunit protein mS23 (285 aa).

This sequence belongs to the mitochondrion-specific ribosomal protein mS23 family. As to quaternary structure, component of the mitochondrial small ribosomal subunit.

The protein resides in the mitochondrion. This Debaryomyces hansenii (strain ATCC 36239 / CBS 767 / BCRC 21394 / JCM 1990 / NBRC 0083 / IGC 2968) (Yeast) protein is Small ribosomal subunit protein mS23 (RSM25).